The following is a 137-amino-acid chain: Large-conductance mechanosensitive channel (137 aa).

Over 1-16 the chain is Cytoplasmic; sequence MSIIKEFREFAMRGNV. The chain crosses the membrane as a helical span at residues 17-45; sequence VDLAVGVIIGALFGKIVSSLVSDIIMPPL. Residues 46–74 are Periplasmic-facing; sequence GLLIGGVDFKQFALFLRNAQGGIPAVVMN. A helical transmembrane segment spans residues 75-94; the sequence is YGAFIQNIFDFIIVAFAIFI. Residues 95-137 are Cytoplasmic-facing; it reads AIKLMNKMRCKQEDTPAAPPKPSAEEKLLAEIRDLLKEQQTRQ.

Belongs to the MscL family. Homopentamer.

Its subcellular location is the cell inner membrane. Channel that opens in response to stretch forces in the membrane lipid bilayer. Forms a nonselective ion channel with a conductance of about 4 nanosiemens. May participate in the regulation of osmotic pressure changes within the cell. The sequence is that of Large-conductance mechanosensitive channel from Pectobacterium carotovorum (Erwinia carotovora).